The primary structure comprises 505 residues: Histidine ammonia-lyase (505 aa).

The segment at residues 141–143 (ASG) is a cross-link (5-imidazolinone (Ala-Gly)). A 2,3-didehydroalanine (Ser) modification is found at Ser-142.

It belongs to the PAL/histidase family. Post-translationally, contains an active site 4-methylidene-imidazol-5-one (MIO), which is formed autocatalytically by cyclization and dehydration of residues Ala-Ser-Gly.

It localises to the cytoplasm. It carries out the reaction L-histidine = trans-urocanate + NH4(+). Its pathway is amino-acid degradation; L-histidine degradation into L-glutamate; N-formimidoyl-L-glutamate from L-histidine: step 1/3. The sequence is that of Histidine ammonia-lyase from Bacillus cereus (strain ZK / E33L).